A 314-amino-acid polypeptide reads, in one-letter code: Methionyl-tRNA formyltransferase (314 aa).

112–115 (SLLP) is a binding site for (6S)-5,6,7,8-tetrahydrofolate.

The protein belongs to the Fmt family.

The catalysed reaction is L-methionyl-tRNA(fMet) + (6R)-10-formyltetrahydrofolate = N-formyl-L-methionyl-tRNA(fMet) + (6S)-5,6,7,8-tetrahydrofolate + H(+). In terms of biological role, attaches a formyl group to the free amino group of methionyl-tRNA(fMet). The formyl group appears to play a dual role in the initiator identity of N-formylmethionyl-tRNA by promoting its recognition by IF2 and preventing the misappropriation of this tRNA by the elongation apparatus. The polypeptide is Methionyl-tRNA formyltransferase (Aeromonas hydrophila subsp. hydrophila (strain ATCC 7966 / DSM 30187 / BCRC 13018 / CCUG 14551 / JCM 1027 / KCTC 2358 / NCIMB 9240 / NCTC 8049)).